Reading from the N-terminus, the 157-residue chain is Large ribosomal subunit protein bL34c (157 aa).

The transit peptide at 1–97 directs the protein to the chloroplast; it reads MASLSTSVVA…GQRRRGLVVR (97 aa).

This sequence belongs to the bacterial ribosomal protein bL34 family. As to quaternary structure, part of the 50S ribosomal subunit.

Its subcellular location is the plastid. The protein localises to the chloroplast. This protein binds directly to 23S ribosomal RNA. This is Large ribosomal subunit protein bL34c (RPL34) from Arabidopsis thaliana (Mouse-ear cress).